Consider the following 122-residue polypeptide: MIQVQSRLNVADNSGARLVQCIKVVGGSRRRYASVGDIIVVAVKDALPTSVIKKGSVEKAVIVRVSKEYRRVDGTYIRFDDNACVVIDANGNPKGKRIFGPVARELRDMDFTKIVSLAPEVL.

This sequence belongs to the universal ribosomal protein uL14 family. As to quaternary structure, part of the 50S ribosomal subunit. Forms a cluster with proteins L3 and L19. In the 70S ribosome, L14 and L19 interact and together make contacts with the 16S rRNA in bridges B5 and B8. Interacts with ribosomal silencing factor RsfS, which may inhibit ribosomal subunit association.

Functionally, binds to 23S rRNA. Forms part of two intersubunit bridges in the 70S ribosome. This chain is Large ribosomal subunit protein uL14, found in Treponema pallidum (strain Nichols).